A 358-amino-acid chain; its full sequence is Cytoplasmic tRNA 2-thiolation protein 1 (358 aa).

The protein belongs to the TtcA family. CTU1/NCS6/ATPBD3 subfamily.

It is found in the cytoplasm. The protein operates within tRNA modification; 5-methoxycarbonylmethyl-2-thiouridine-tRNA biosynthesis. In terms of biological role, plays a central role in 2-thiolation of mcm(5)S(2)U at tRNA wobble positions of tRNA(Lys), tRNA(Glu) and tRNA(Gln). Directly binds tRNAs and probably acts by catalyzing adenylation of tRNAs, an intermediate required for 2-thiolation. It is unclear whether it acts as a sulfurtransferase that transfers sulfur from thiocarboxylated URM1 onto the uridine of tRNAs at wobble position. Prior mcm(5) tRNA modification by the elongator complex is required for 2-thiolation. May also be involved in protein urmylation. The protein is Cytoplasmic tRNA 2-thiolation protein 1 of Candida glabrata (strain ATCC 2001 / BCRC 20586 / JCM 3761 / NBRC 0622 / NRRL Y-65 / CBS 138) (Yeast).